The sequence spans 230 residues: Cytochrome c oxidase subunit 2 (230 aa).

The Mitochondrial intermembrane segment spans residues 1–14; sequence MAHPSQLGFQDAAS. A helical transmembrane segment spans residues 15 to 45; sequence PVMEELLHFHDHTLMIVFLISTLVLYIIMAM. Over 46–59 the chain is Mitochondrial matrix; that stretch reads VSTKLTNKYILDSQ. A helical transmembrane segment spans residues 60–87; that stretch reads EIEIVWTILPAVILIMIALPSLRILYLM. The Mitochondrial intermembrane segment spans residues 88–230; the sequence is DEINDPHLTI…SWSSLMLEEA (143 aa). The Cu cation site is built by His-161, Cys-196, Glu-198, Cys-200, His-204, and Met-207. Glu-198 lines the Mg(2+) pocket.

Belongs to the cytochrome c oxidase subunit 2 family. In terms of assembly, component of the cytochrome c oxidase (complex IV, CIV), a multisubunit enzyme composed of 14 subunits. The complex is composed of a catalytic core of 3 subunits MT-CO1, MT-CO2 and MT-CO3, encoded in the mitochondrial DNA, and 11 supernumerary subunits COX4I, COX5A, COX5B, COX6A, COX6B, COX6C, COX7A, COX7B, COX7C, COX8 and NDUFA4, which are encoded in the nuclear genome. The complex exists as a monomer or a dimer and forms supercomplexes (SCs) in the inner mitochondrial membrane with NADH-ubiquinone oxidoreductase (complex I, CI) and ubiquinol-cytochrome c oxidoreductase (cytochrome b-c1 complex, complex III, CIII), resulting in different assemblies (supercomplex SCI(1)III(2)IV(1) and megacomplex MCI(2)III(2)IV(2)). Found in a complex with TMEM177, COA6, COX18, COX20, SCO1 and SCO2. Interacts with TMEM177 in a COX20-dependent manner. Interacts with COX20. Interacts with COX16. It depends on Cu cation as a cofactor.

It is found in the mitochondrion inner membrane. The catalysed reaction is 4 Fe(II)-[cytochrome c] + O2 + 8 H(+)(in) = 4 Fe(III)-[cytochrome c] + 2 H2O + 4 H(+)(out). Its function is as follows. Component of the cytochrome c oxidase, the last enzyme in the mitochondrial electron transport chain which drives oxidative phosphorylation. The respiratory chain contains 3 multisubunit complexes succinate dehydrogenase (complex II, CII), ubiquinol-cytochrome c oxidoreductase (cytochrome b-c1 complex, complex III, CIII) and cytochrome c oxidase (complex IV, CIV), that cooperate to transfer electrons derived from NADH and succinate to molecular oxygen, creating an electrochemical gradient over the inner membrane that drives transmembrane transport and the ATP synthase. Cytochrome c oxidase is the component of the respiratory chain that catalyzes the reduction of oxygen to water. Electrons originating from reduced cytochrome c in the intermembrane space (IMS) are transferred via the dinuclear copper A center (CU(A)) of subunit 2 and heme A of subunit 1 to the active site in subunit 1, a binuclear center (BNC) formed by heme A3 and copper B (CU(B)). The BNC reduces molecular oxygen to 2 water molecules using 4 electrons from cytochrome c in the IMS and 4 protons from the mitochondrial matrix. The protein is Cytochrome c oxidase subunit 2 (MT-CO2) of Squalus acanthias (Spiny dogfish).